A 323-amino-acid chain; its full sequence is Zinc finger protein 784 (323 aa).

The interval 1-26 is disordered; it reads MAAARPEAQSRSSPTPESRSQEPLDL. Residues 9–18 are compositionally biased toward polar residues; sequence QSRSSPTPES. Ser13 bears the Phosphoserine mark. 6 C2H2-type zinc fingers span residues 65–87, 101–123, 129–151, 196–218, 224–246, and 252–274; these read FHCA…EHGH, SRCH…YSLH, YRCA…QHRH, FACR…ERVH, YHCG…ARIH, and FRCT…QRTH. Residues 269–323 are disordered; the sequence is KHQRTHFHGPGPGLGDSGGQLGSSAAEGSGSGCGVGDPAEEGRGETAKVKVEADQ. The span at 278–289 shows a compositional bias: gly residues; the sequence is PGPGLGDSGGQL. Positions 308 to 323 are enriched in basic and acidic residues; the sequence is EEGRGETAKVKVEADQ. Residue Lys318 forms a Glycyl lysine isopeptide (Lys-Gly) (interchain with G-Cter in SUMO2) linkage.

Belongs to the krueppel C2H2-type zinc-finger protein family.

The protein resides in the nucleus. Its function is as follows. May be involved in transcriptional regulation. This Homo sapiens (Human) protein is Zinc finger protein 784 (ZNF784).